The primary structure comprises 717 residues: Ribosomal RNA large subunit methyltransferase K/L (717 aa).

Positions 44–155 constitute a THUMP domain; that stretch reads DAYKVCIYSY…KQFVNVFLCL (112 aa).

The protein belongs to the methyltransferase superfamily. RlmKL family.

Its subcellular location is the cytoplasm. It carries out the reaction guanosine(2445) in 23S rRNA + S-adenosyl-L-methionine = N(2)-methylguanosine(2445) in 23S rRNA + S-adenosyl-L-homocysteine + H(+). It catalyses the reaction guanosine(2069) in 23S rRNA + S-adenosyl-L-methionine = N(2)-methylguanosine(2069) in 23S rRNA + S-adenosyl-L-homocysteine + H(+). Specifically methylates the guanine in position 2445 (m2G2445) and the guanine in position 2069 (m7G2069) of 23S rRNA. In Francisella tularensis subsp. tularensis (strain SCHU S4 / Schu 4), this protein is Ribosomal RNA large subunit methyltransferase K/L.